Reading from the N-terminus, the 317-residue chain is tRNA dimethylallyltransferase (317 aa).

19 to 26 contacts ATP; the sequence is GPTASGKS. Residue 21 to 26 coordinates substrate; it reads TASGKS. The interval 44 to 47 is interaction with substrate tRNA; the sequence is DSMQ.

This sequence belongs to the IPP transferase family. In terms of assembly, monomer. It depends on Mg(2+) as a cofactor.

It catalyses the reaction adenosine(37) in tRNA + dimethylallyl diphosphate = N(6)-dimethylallyladenosine(37) in tRNA + diphosphate. Its function is as follows. Catalyzes the transfer of a dimethylallyl group onto the adenine at position 37 in tRNAs that read codons beginning with uridine, leading to the formation of N6-(dimethylallyl)adenosine (i(6)A). In Methylorubrum populi (strain ATCC BAA-705 / NCIMB 13946 / BJ001) (Methylobacterium populi), this protein is tRNA dimethylallyltransferase.